The primary structure comprises 561 residues: Carbohydrate sulfotransferase 15 (561 aa).

The Cytoplasmic segment spans residues methionine 1–cysteine 80. The chain crosses the membrane as a helical; Signal-anchor for type II membrane protein span at residues serine 81–alanine 101. Residues histidine 102–threonine 561 lie on the Lumenal side of the membrane. Lysine 263–threonine 267 contributes to the 3'-phosphoadenylyl sulfate binding site. A glycan (N-linked (GlcNAc...) asparagine) is linked at asparagine 364. 3'-phosphoadenylyl sulfate is bound by residues arginine 392 and serine 400.

It belongs to the sulfotransferase 1 family. Homodimer; disulfide-linked (Potential). The relevance of homodimerization is however unsure. May interact with phosphorylated proteins in resting B-cells, including HCK. It depends on a divalent metal cation as a cofactor. Glutathione is required as a cofactor. Glycosylated.

The protein localises to the golgi apparatus membrane. It carries out the reaction dermatan 4'-sulfate + n 3'-phosphoadenylyl sulfate = dermatan 4',6'-bissulfate + n adenosine 3',5'-bisphosphate + n H(+). It catalyses the reaction chondroitin 4'-sulfate + n 3'-phosphoadenylyl sulfate = chondroitin 4',6'-bissulfate + n adenosine 3',5'-bisphosphate + n H(+). Its activity is regulated as follows. Inhibited by phenyl beta-GalNAc(4,6-SO(4)). In terms of biological role, sulfotransferase that transfers sulfate from 3'-phosphoadenosine 5'-phosphosulfate (PAPS) to the C-6 hydroxyl group of the GalNAc 4-sulfate residue of chondroitin sulfate A and forms chondroitin sulfate E containing GlcA-GalNAc(4,6-SO(4)) repeating units. It also transfers sulfate to a unique non-reducing terminal sequence, GalNAc(4SO4)-GlcA(2SO4)-GalNAc(6SO4), to yield a highly sulfated structure similar to the structure found in thrombomodulin chondroitin sulfate. May also act as a B-cell receptor involved in BCR ligation-mediated early activation that mediate regulatory signals key to B-cell development and/or regulation of B-cell-specific RAG expression; however such results are unclear in vivo. This Mus musculus (Mouse) protein is Carbohydrate sulfotransferase 15 (Chst15).